The sequence spans 528 residues: Butyrophilin subfamily 2 member A2 (528 aa).

A signal peptide spans 1 to 29; the sequence is MESAAALHFSRPASLLLLLLLSLCALVSA. Over 30–249 the chain is Extracellular; that stretch reads QVTVVGPTDP…SFMPSVSPCA (220 aa). The 112-residue stretch at 31–142 folds into the Ig-like V-type domain; sequence VTVVGPTDPI…SYDEAILHLI (112 aa). 3 N-linked (GlcNAc...) asparagine glycosylation sites follow: asparagine 47, asparagine 115, and asparagine 121. A disulfide bond links cysteine 52 and cysteine 126. The Ig-like C2-type domain occupies 150 to 232; the sequence is PLIEMRGHED…NNTLLSQKKE (83 aa). The chain crosses the membrane as a helical span at residues 250–270; sequence VALPIVVVILMILFAVCMYWI. The stretch at 270–320 forms a coiled coil; sequence INKLQKEKKILSGEKEFERETREIAVKELEKERVQKEEELQVKEKLQEELR. Residues 271–528 lie on the Cytoplasmic side of the membrane; that stretch reads NKLQKEKKIL…LHRVGTHQSL (258 aa). The region spanning 311-507 is the B30.2/SPRY domain; that stretch reads VKEKLQEELR…IFICPALTGA (197 aa).

The protein belongs to the immunoglobulin superfamily. BTN/MOG family. N-glycosylated.

It is found in the membrane. Functionally, inhibits the proliferation of CD4 and CD8 T-cells activated by anti-CD3 antibodies, T-cell metabolism and IL2 and IFNG secretion. The polypeptide is Butyrophilin subfamily 2 member A2 (BTN2A2) (Pongo abelii (Sumatran orangutan)).